Here is a 254-residue protein sequence, read N- to C-terminus: MGRGRVELKRIENKINRQVTFAKRRNGLLKKAYELSVLCDAEVALIIFSNRGKLYEFCSSSSMIRTLERYQKCNYGPPEPNVPSREALAVELSSQQEYLKLKERYDALQRTQRNLLGEDLGPLSTKELELLERQLDSSLKQIRALRTQFMLDQLNDLQSKERMLNETNKTLRLRLADGYQMPLQLNPNQEDHHVDYGRHDQQQQQNSHHAFFQPLECEPILQMGYQGQQDHGMEAGPSENNYMLGWLPYDTNSI.

The 55-residue stretch at 3-57 (RGRVELKRIENKINRQVTFAKRRNGLLKKAYELSVLCDAEVALIIFSNRGKLYEF) folds into the MADS-box domain. Residues 91 to 181 (ELSSQQEYLK…RLRLADGYQM (91 aa)) form the K-box domain.

The protein resides in the nucleus. In terms of biological role, probable transcription factor active in inflorescence development and floral organogenesis. This is Agamous-like MADS-box protein AGL9 homolog (AGL9) from Sinapis alba (White mustard).